We begin with the raw amino-acid sequence, 215 residues long: Protein transport protein sec22 (215 aa).

At 1-194 (MVKSTTVTRL…RVNLEALWRQ (194 aa)) the chain is on the cytoplasmic side. The 110-residue stretch at 9–118 (RLDGLPLAAS…YAFVQFDTFM (110 aa)) folds into the Longin domain. In terms of domain architecture, v-SNARE coiled-coil homology spans 133–193 (NLDKLNTELK…RRVNLEALWR (61 aa)). Residues 195–215 (YGPVSIIALLFLIFVYWRFFA) traverse the membrane as a helical; Anchor for type IV membrane protein segment.

This sequence belongs to the synaptobrevin family. As to quaternary structure, component of two distinct SNARE complexes consisting of sed5, bos1, bet1 and sec22 or ufe1, use1, sec20 and sec22. Ykt6 can probably replace sec22 as subunit of either complex.

The protein localises to the membrane. It localises to the endoplasmic reticulum membrane. The protein resides in the golgi apparatus membrane. Its function is as follows. Nonessential SNARE involved in targeting and fusion of ER-derived transport vesicles with the Golgi complex as well as Golgi-derived retrograde transport vesicles with the ER. In Schizosaccharomyces pombe (strain 972 / ATCC 24843) (Fission yeast), this protein is Protein transport protein sec22 (sec22).